A 416-amino-acid chain; its full sequence is Serine hydroxymethyltransferase (416 aa).

(6S)-5,6,7,8-tetrahydrofolate-binding positions include Leu-121 and Gly-125–Leu-127. Lys-229 carries the N6-(pyridoxal phosphate)lysine modification.

Belongs to the SHMT family. As to quaternary structure, homodimer. It depends on pyridoxal 5'-phosphate as a cofactor.

The protein resides in the cytoplasm. It carries out the reaction (6R)-5,10-methylene-5,6,7,8-tetrahydrofolate + glycine + H2O = (6S)-5,6,7,8-tetrahydrofolate + L-serine. It participates in one-carbon metabolism; tetrahydrofolate interconversion. The protein operates within amino-acid biosynthesis; glycine biosynthesis; glycine from L-serine: step 1/1. Functionally, catalyzes the reversible interconversion of serine and glycine with tetrahydrofolate (THF) serving as the one-carbon carrier. This reaction serves as the major source of one-carbon groups required for the biosynthesis of purines, thymidylate, methionine, and other important biomolecules. Also exhibits THF-independent aldolase activity toward beta-hydroxyamino acids, producing glycine and aldehydes, via a retro-aldol mechanism. In Neisseria meningitidis serogroup B (strain ATCC BAA-335 / MC58), this protein is Serine hydroxymethyltransferase.